Here is a 44-residue protein sequence, read N- to C-terminus: Somatoliberin (44 aa).

L44 is modified (leucine amide).

It belongs to the glucagon family.

It localises to the secreted. Its function is as follows. GRF is released by the hypothalamus and acts on the adenohypophyse to stimulate the secretion of growth hormone. The protein is Somatoliberin (GHRH) of Ovis aries (Sheep).